The chain runs to 697 residues: Putative cryptochrome DASH (697 aa).

The region spanning 5–164 (KLLVYLLRRD…GFKLWHDEKY (160 aa)) is the Photolyase/cryptochrome alpha/beta domain. Disordered regions lie at residues 170–215 (DNGL…FPSW) and 554–697 (FSVT…PPHI). Residues 188–198 (KTQEPLRERPR) show a composition bias toward basic and acidic residues. A compositionally biased stretch (basic residues) spans 560–569 (RGNRRPYRWR). Over residues 578 to 590 (GRGGRGGGTGNTS) the composition is skewed to gly residues. Low complexity-rich tracts occupy residues 659–675 (QQQQ…YAHQ) and 683–697 (RQQQ…PPHI).

This sequence belongs to the DNA photolyase class-1 family. FAD is required as a cofactor. (6R)-5,10-methylene-5,6,7,8-tetrahydrofolate serves as cofactor.

May have a photoreceptor function. This is Putative cryptochrome DASH from Gibberella zeae (strain ATCC MYA-4620 / CBS 123657 / FGSC 9075 / NRRL 31084 / PH-1) (Wheat head blight fungus).